We begin with the raw amino-acid sequence, 266 residues long: Thymidylate synthase (266 aa).

A dUMP-binding site is contributed by arginine 24. Histidine 54 is a binding site for (6R)-5,10-methylene-5,6,7,8-tetrahydrofolate. 129-130 lines the dUMP pocket; the sequence is RR. Catalysis depends on cysteine 149, which acts as the Nucleophile. Residues 169-172, asparagine 180, and 210-212 contribute to the dUMP site; these read RSAD and HIY. Residue aspartate 172 participates in (6R)-5,10-methylene-5,6,7,8-tetrahydrofolate binding. Alanine 265 is a (6R)-5,10-methylene-5,6,7,8-tetrahydrofolate binding site.

This sequence belongs to the thymidylate synthase family. Bacterial-type ThyA subfamily. In terms of assembly, homodimer.

It localises to the cytoplasm. It carries out the reaction dUMP + (6R)-5,10-methylene-5,6,7,8-tetrahydrofolate = 7,8-dihydrofolate + dTMP. The protein operates within pyrimidine metabolism; dTTP biosynthesis. Its function is as follows. Catalyzes the reductive methylation of 2'-deoxyuridine-5'-monophosphate (dUMP) to 2'-deoxythymidine-5'-monophosphate (dTMP) while utilizing 5,10-methylenetetrahydrofolate (mTHF) as the methyl donor and reductant in the reaction, yielding dihydrofolate (DHF) as a by-product. This enzymatic reaction provides an intracellular de novo source of dTMP, an essential precursor for DNA biosynthesis. This Mycobacterium bovis (strain ATCC BAA-935 / AF2122/97) protein is Thymidylate synthase.